A 116-amino-acid polypeptide reads, in one-letter code: Putative RNase MJ0125 (116 aa).

Catalysis depends on residues Arg-76 and His-81. An RX(4)HXY motif motif is present at residues 76-83 (RDKLIHQY). Position 83 is an O-di-AMP-tyrosine (Tyr-83).

The protein belongs to the HepT RNase toxin family. Homodimer, probably forms a complex with cognate antitoxin MJ0126. In terms of processing, modified by cognate antitoxin MJ0126; probably at least 2 successive AMPylation events occur on Tyr-83.

Functionally, probable toxic component of a putative type VII toxin-antitoxin (TA) system, probably an RNase. Probably neutralized by cognate antitoxin MJ0126. Neutralization may be due to AMPylation by MJ0126. This chain is Putative RNase MJ0125, found in Methanocaldococcus jannaschii (strain ATCC 43067 / DSM 2661 / JAL-1 / JCM 10045 / NBRC 100440) (Methanococcus jannaschii).